The sequence spans 142 residues: Small ribosomal subunit protein uS12z (142 aa).

At Pro61 the chain carries Hydroxyproline.

It belongs to the universal ribosomal protein uS12 family.

The protein is Small ribosomal subunit protein uS12z (RPS23A) of Arabidopsis thaliana (Mouse-ear cress).